A 309-amino-acid chain; its full sequence is Porphobilinogen deaminase (309 aa).

An S-(dipyrrolylmethanemethyl)cysteine modification is found at cysteine 241.

Belongs to the HMBS family. As to quaternary structure, monomer. Dipyrromethane is required as a cofactor.

It carries out the reaction 4 porphobilinogen + H2O = hydroxymethylbilane + 4 NH4(+). It participates in porphyrin-containing compound metabolism; protoporphyrin-IX biosynthesis; coproporphyrinogen-III from 5-aminolevulinate: step 2/4. Tetrapolymerization of the monopyrrole PBG into the hydroxymethylbilane pre-uroporphyrinogen in several discrete steps. This chain is Porphobilinogen deaminase, found in Desulforudis audaxviator (strain MP104C).